The sequence spans 544 residues: MTKWLLLVVCLGIACQDVTSAAVNHQRKSANNLAHSMKVIYEWKHIDFDFGSDERRDAAIKSGEFDHTKNYPFDVDRWRDKTFVTIERNNGVPSSLNVVTNKKGKGGPLLRPYPDWSFAKYEDCSGIVSAFKIAVDKFDRLWVLDSGLVNNNQPMCSPKLLTFDLKTSKLVKQVEIPHNIAVNATTGMGELVSLAVQAIDRTNTMVYIADEKGEGLIMYQNSDDSFHRLTSNTFDYDPRYTKLTVAGESFTVKNGIYGIALSPVTNNLYYSPLLSHGLYYVDTEQFSNPQYEENNVQYEGSQDILNTQSFGKVVSKNGVLFLGLVGNSGIACVNEHQVLQRESFDVVAQNEETLQMIVSMKIMENLPQSGRINDPEGNEYMLALSNRMQKIINNDFNFNDVNFRILGANVDDLMRNTRCGRYHNQNAGNQNADNQNADNQNANNQNADNQNANKQNGNRQNDNRQNDNKQNGNRQNDNKQNGNRQNDNKQNGNRQNGNKQNDNKQNGNRQNDNKRNGNRQNDNQNNQNDNNRNDNQVHHSSKLH.

The first 20 residues, 1-20 (MTKWLLLVVCLGIACQDVTS), serve as a signal peptide directing secretion. N183 is a glycosylation site (N-linked (GlcNAc...) asparagine). Residues 421 to 544 (RYHNQNAGNQ…NQVHHSSKLH (124 aa)) form a disordered region. 20 repeat units span residues 424–428 (NQNAG), 429–433 (NQNAD), 434–438 (NQNAD), 439–443 (NQNAN), 444–448 (NQNAD), 449–453 (NQNAN), 454–458 (KQNGN), 459–463 (RQNDN), 464–468 (RQNDN), 469–473 (KQNGN), 474–478 (RQNDN), 479–483 (KQNGN), 484–488 (RQNDN), 489–493 (KQNGN), 494–498 (RQNGN), 499–503 (KQNDN), 504–508 (KQNGN), 509–513 (RQNDN), 514–518 (KRNGN), and 519–523 (RQNDN). Composition is skewed to low complexity over residues 424–460 (NQNA…GNRQ), 468–510 (NKQN…GNRQ), and 518–530 (NRQN…QNDN). The interval 424 to 523 (NQNAGNQNAD…KRNGNRQNDN (100 aa)) is 23 X 5 AA tandem repeats of [NKR]-[RQ]-N-[AGD]-[DNG]. Residues 524-525 (QN) form a 21; half-length repeat. 2 tandem repeats follow at residues 526–530 (NQNDN) and 531–535 (NRNDN).

It belongs to the major royal jelly protein family. In terms of assembly, homoligomer; in the absence of RNA, assembles into a higher-order oligomeric form, composed of around 20 monomer units. Found in and secreted from the hypopharyngeal glands of the worker honey bee (at protein level); expression peaks at 12 days post eclosion. Expressed in the brains of worker bees. Expressed in the brains of adult worker bees peaking at 12 days post eclosion (at protein level). Expressed in the spermatheca of adult queen bees (at protein level); Expression levels are higher in mated queens than in virgin queens. Expressed in queen bee ovaries and male drone testes. Expression in the head of forager worker bees is lower than in the heads of nurse worker bees.

The protein resides in the secreted. Functionally, abundant protein component of royal jelly, a substance produced in the hypopharyngeal gland containing proteins, free amino acids, fatty acids, sugars and other nutrients, which is fed to developing larvae by worker nurse bees. Major royal jelly proteins (MRJPs) are high in essential amino acids and probably have a nutritional function in larval food. All larvae are fed some royal jelly (also known as worker jelly) early in their development but it forms the principal source of nutrition for larvae destined to become queen bees. Secreted RNA-binding protein required to concentrate, stabilize and enhance environmental RNA bioavailability in the honey bee royal jelly. Acts as a RNA-aggregating protein: binds 18 nucleotides and longer single- and double-stranded RNA (ssRNA and dsRNA, respectively) in a non-specific manner. RNA-binding drives super-order assembly of oligomers into extracellular ribonucleoprotein granules that concentrate, protect and enhance RNA uptake granules, facilitating RNA transfer among bees. Produced in the spermatheca of adult queen bees, along with other major royal jelly proteins, where it may act as a nutrient supply for sperm stored by mated queens, or be involved in energy metabolism. The polypeptide is Major royal jelly protein 3 (Apis mellifera (Honeybee)).